Here is a 667-residue protein sequence, read N- to C-terminus: Long-chain fatty acid transport protein 3 (667 aa).

The helical transmembrane segment at 3–23 threads the bilayer; sequence ALLLLLPLLLLLPLLLKLDVW. The interval 114–144 is disordered; sequence TGGRRGSGRGSTEEGARVAPPAGDAAARGTT. Residues 130–144 are compositionally biased toward low complexity; sequence RVAPPAGDAAARGTT. ATP-binding positions include 272 to 276, H315, T412, D512, R527, and K619; that span reads TSGTT.

It belongs to the ATP-dependent AMP-binding enzyme family. In terms of tissue distribution, expressed at high levels in adrenal gland, testis and ovary. Expressed at lower levels in adult brain. Found in adrenal cortical cells, spermatocytes and interstitial cells of the testis, theca cells of the ovary, cerebral cortical neurons, and cerebellar Purkinje cells (at protein level).

The protein resides in the mitochondrion membrane. The catalysed reaction is a fatty acid(in) = a fatty acid(out). The enzyme catalyses a long-chain fatty acid + ATP + CoA = a long-chain fatty acyl-CoA + AMP + diphosphate. It carries out the reaction (5Z,8Z,11Z,14Z)-eicosatetraenoate + ATP + CoA = (5Z,8Z,11Z,14Z)-eicosatetraenoyl-CoA + AMP + diphosphate. It catalyses the reaction hexadecanoate + ATP + CoA = hexadecanoyl-CoA + AMP + diphosphate. The catalysed reaction is (9Z)-octadecenoate + ATP + CoA = (9Z)-octadecenoyl-CoA + AMP + diphosphate. The enzyme catalyses (9Z,12Z)-octadecadienoate + ATP + CoA = (9Z,12Z)-octadecadienoyl-CoA + AMP + diphosphate. It carries out the reaction a very long-chain fatty acid + ATP + CoA = a very long-chain fatty acyl-CoA + AMP + diphosphate. It catalyses the reaction tetracosanoate + ATP + CoA = tetracosanoyl-CoA + AMP + diphosphate. In terms of biological role, mainly functions as an acyl-CoA ligase catalyzing the ATP-dependent formation of fatty acyl-CoA using LCFA and very-long-chain fatty acids (VLCFA) as substrates. Can mediate the levels of long-chain fatty acids (LCFA) in the cell by facilitating their transport across membranes. The polypeptide is Long-chain fatty acid transport protein 3 (Slc27a3) (Mus musculus (Mouse)).